A 286-amino-acid polypeptide reads, in one-letter code: Pantothenate synthetase (286 aa).

30-37 (MGNLHEGH) serves as a coordination point for ATP. The active-site Proton donor is His-37. Gln-64 is a (R)-pantoate binding site. Gln-64 contributes to the beta-alanine binding site. 151 to 154 (GKKD) contributes to the ATP binding site. Gln-157 lines the (R)-pantoate pocket. Residues Leu-180 and 188 to 191 (LSSR) each bind ATP.

It belongs to the pantothenate synthetase family. As to quaternary structure, homodimer.

Its subcellular location is the cytoplasm. It carries out the reaction (R)-pantoate + beta-alanine + ATP = (R)-pantothenate + AMP + diphosphate + H(+). Its pathway is cofactor biosynthesis; (R)-pantothenate biosynthesis; (R)-pantothenate from (R)-pantoate and beta-alanine: step 1/1. In terms of biological role, catalyzes the condensation of pantoate with beta-alanine in an ATP-dependent reaction via a pantoyl-adenylate intermediate. This chain is Pantothenate synthetase, found in Leptothrix cholodnii (strain ATCC 51168 / LMG 8142 / SP-6) (Leptothrix discophora (strain SP-6)).